The following is a 174-amino-acid chain: V-type proton ATPase catalytic subunit A (174 aa).

The protein belongs to the ATPase alpha/beta chains family. In terms of assembly, V-ATPase is a heteromultimeric enzyme made up of two complexes: the ATP-hydrolytic V1 complex and the proton translocation V0 complex. The V1 complex consists of three catalytic AB heterodimers that form a heterohexamer, three peripheral stalks each consisting of EG heterodimers, one central rotor including subunits D and F, and the regulatory subunits C and H. The proton translocation complex V0 consists of the proton transport subunit a, a ring of proteolipid subunits c9c'', rotary subunit d, subunits e and f, and the accessory subunits ATP6AP1/Ac45 and ATP6AP2/PRR. Interacts with the V0 complex V-ATPase subunit a4 ATP6V0A4. Interacts with WFS1. Interacts with alpha-crystallin B chain/CRYAB and with MTOR, forming a ternary complex.

The protein localises to the cytoplasm. It localises to the cytosol. The protein resides in the cytoplasmic vesicle. Its subcellular location is the secretory vesicle. It is found in the clathrin-coated vesicle membrane. The protein localises to the lysosome. The enzyme catalyses ATP + H2O + 4 H(+)(in) = ADP + phosphate + 5 H(+)(out). With respect to regulation, ATP hydrolysis occurs at the interface between the nucleotide-binding domains of subunits A and B. ATP hydrolysis triggers a conformational change in the subunits D and F, which induces a shift of subunit d. The c-ring is subsequently rotated and results in a continuous proton translocation across the membrane. Catalytic subunit of the V1 complex of vacuolar(H+)-ATPase (V-ATPase), a multisubunit enzyme composed of a peripheral complex (V1) that hydrolyzes ATP and a membrane integral complex (V0) that translocates protons. V-ATPase is responsible for acidifying and maintaining the pH of intracellular compartments and in some cell types, is targeted to the plasma membrane, where it is responsible for acidifying the extracellular environment. In aerobic conditions, involved in intracellular iron homeostasis, thus triggering the activity of Fe(2+) prolyl hydroxylase (PHD) enzymes, and leading to HIF1A hydroxylation and subsequent proteasomal degradation. May play a role in neurite development and synaptic connectivity. The chain is V-type proton ATPase catalytic subunit A from Mesocricetus auratus (Golden hamster).